The chain runs to 543 residues: Glutamyl-tRNA(Gln) amidotransferase subunit B-1, chloroplastic/mitochondrial (543 aa).

The disordered stretch occupies residues 1–47 (MIRAGGPSPSPRGRRAGPIRLPRRAPSSTPTRAKTEEKASADASSRT). Residues 12–23 (RGRRAGPIRLPR) are compositionally biased toward basic residues.

It belongs to the GatB/GatE family. GatB subfamily. In terms of assembly, subunit of the heterotrimeric GatCAB amidotransferase (AdT) complex, composed of A, B and C subunits.

The protein resides in the mitochondrion. It localises to the plastid. The protein localises to the chloroplast. The catalysed reaction is L-glutamyl-tRNA(Gln) + L-glutamine + ATP + H2O = L-glutaminyl-tRNA(Gln) + L-glutamate + ADP + phosphate + H(+). Its function is as follows. Allows the formation of correctly charged Gln-tRNA(Gln) through the transamidation of misacylated Glu-tRNA(Gln) in chloroplasts and mitochondria. The reaction takes place in the presence of glutamine and ATP through an activated gamma-phospho-Glu-tRNA(Gln). The chain is Glutamyl-tRNA(Gln) amidotransferase subunit B-1, chloroplastic/mitochondrial from Micromonas commoda (strain RCC299 / NOUM17 / CCMP2709) (Picoplanktonic green alga).